Consider the following 429-residue polypeptide: Enolase (429 aa).

A (2R)-2-phosphoglycerate-binding site is contributed by Gln162. Glu204 acts as the Proton donor in catalysis. Mg(2+)-binding residues include Asp241, Glu283, and Asp310. Lys335, Arg364, Ser365, and Lys386 together coordinate (2R)-2-phosphoglycerate. Catalysis depends on Lys335, which acts as the Proton acceptor.

The protein belongs to the enolase family. Requires Mg(2+) as cofactor.

Its subcellular location is the cytoplasm. The protein localises to the secreted. It localises to the cell surface. It carries out the reaction (2R)-2-phosphoglycerate = phosphoenolpyruvate + H2O. The protein operates within carbohydrate degradation; glycolysis; pyruvate from D-glyceraldehyde 3-phosphate: step 4/5. In terms of biological role, catalyzes the reversible conversion of 2-phosphoglycerate (2-PG) into phosphoenolpyruvate (PEP). It is essential for the degradation of carbohydrates via glycolysis. The polypeptide is Enolase (Mycobacterium sp. (strain JLS)).